The primary structure comprises 171 residues: MEKRLQEAQLYKEKGNQCYREGKYRDAVSGYHRALLQLRGLDPSLPSPIPNLGPQGPALTPEQENLLHTTQTDCYNNLAACLLQMEPVNYERVKEYSQKVLERQPDNAKALYRAGVAFFHLQDYDQARHYLMAAVNRKPKDANVRRYLQRTQLELSSYHRKEKQLYLGMFG.

3 TPR repeats span residues 8 to 41, 72 to 107, and 108 to 141; these read AQLY…LRGL, TDCY…QPDN, and AKAL…KPKD.

This sequence belongs to the TTC9 family.

This chain is Tetratricopeptide repeat protein 9C (TTC9C), found in Bos taurus (Bovine).